The following is a 163-amino-acid chain: Nucleotide-binding protein HAPS_2236 (163 aa).

Belongs to the YajQ family.

Its function is as follows. Nucleotide-binding protein. The chain is Nucleotide-binding protein HAPS_2236 from Glaesserella parasuis serovar 5 (strain SH0165) (Haemophilus parasuis).